The chain runs to 184 residues: Ribose 1,5-bisphosphate phosphokinase PhnN (184 aa).

11–18 (GPSGAGKD) is an ATP binding site.

The protein belongs to the ribose 1,5-bisphosphokinase family.

The enzyme catalyses alpha-D-ribose 1,5-bisphosphate + ATP = 5-phospho-alpha-D-ribose 1-diphosphate + ADP. It participates in metabolic intermediate biosynthesis; 5-phospho-alpha-D-ribose 1-diphosphate biosynthesis; 5-phospho-alpha-D-ribose 1-diphosphate from D-ribose 5-phosphate (route II): step 3/3. Functionally, catalyzes the phosphorylation of ribose 1,5-bisphosphate to 5-phospho-D-ribosyl alpha-1-diphosphate (PRPP). This is Ribose 1,5-bisphosphate phosphokinase PhnN from Burkholderia mallei (strain SAVP1).